Reading from the N-terminus, the 403-residue chain is uncharacterized protein (403 aa).

Histidine 81 serves as a coordination point for Zn(2+). The active site involves aspartate 83. Aspartate 114 lines the Zn(2+) pocket. Glutamate 148 acts as the Proton acceptor in catalysis. Zn(2+)-binding residues include glutamate 149, glutamate 174, and histidine 374.

The protein belongs to the peptidase M20A family. Zn(2+) is required as a cofactor. Co(2+) serves as cofactor.

This is an uncharacterized protein from Escherichia coli O157:H7.